The primary structure comprises 120 residues: Peptidyl-tRNA hydrolase (120 aa).

It belongs to the PTH2 family.

It localises to the cytoplasm. The catalysed reaction is an N-acyl-L-alpha-aminoacyl-tRNA + H2O = an N-acyl-L-amino acid + a tRNA + H(+). In terms of biological role, the natural substrate for this enzyme may be peptidyl-tRNAs which drop off the ribosome during protein synthesis. The protein is Peptidyl-tRNA hydrolase of Pyrobaculum aerophilum (strain ATCC 51768 / DSM 7523 / JCM 9630 / CIP 104966 / NBRC 100827 / IM2).